Here is a 137-residue protein sequence, read N- to C-terminus: Large ribosomal subunit protein uL16c (137 aa).

It belongs to the universal ribosomal protein uL16 family. In terms of assembly, part of the 50S ribosomal subunit.

The protein resides in the plastid. It localises to the chloroplast. The protein is Large ribosomal subunit protein uL16c of Hordeum vulgare (Barley).